The chain runs to 507 residues: Arabinose import ATP-binding protein AraG (507 aa).

2 consecutive ABC transporter domains span residues Leu-14–Arg-249 and Arg-249–Thr-505. Gly-46–Ser-53 contacts ATP.

It belongs to the ABC transporter superfamily. Arabinose importer (TC 3.A.1.2.2) family. In terms of assembly, the complex is composed of two ATP-binding proteins (AraG), two transmembrane proteins (AraH) and a solute-binding protein (AraF).

Its subcellular location is the cell inner membrane. The catalysed reaction is L-arabinose(out) + ATP + H2O = L-arabinose(in) + ADP + phosphate + H(+). Its function is as follows. Part of the ABC transporter complex AraFGH involved in arabinose import. Responsible for energy coupling to the transport system. This is Arabinose import ATP-binding protein AraG from Pseudomonas savastanoi pv. phaseolicola (strain 1448A / Race 6) (Pseudomonas syringae pv. phaseolicola (strain 1448A / Race 6)).